We begin with the raw amino-acid sequence, 182 residues long: CDP-diacylglycerol--glycerol-3-phosphate 3-phosphatidyltransferase (182 aa).

Topologically, residues 1-12 (MRLNIPTCLTLF) are cytoplasmic. The helical transmembrane segment at 13–37 (RLIIVPFFIIVFYLPFSNASFYSAI) threads the bilayer. At 38–60 (IFILAALTDWFDGFLARKLNQTT) the chain is on the periplasmic side. The helical transmembrane segment at 61 to 81 (CFGAFLDPVADKIIVVIGLIL) threads the bilayer. At 82–86 (IIEYF) the chain is on the cytoplasmic side. The helical transmembrane segment at 87–107 (HSFWITIPSLIMIIREIIISS) threads the bilayer. Residues 108-145 (LREWMAEIGKNNLLSVSLISKLKTSIQMLAIFSLLWKE) are Periplasmic-facing. The chain crosses the membrane as a helical span at residues 146–168 (TYIIIIIGILSLYVSSILAFLSM). Over 169 to 181 (LKYFYIAWRDLFR) the chain is Cytoplasmic.

This sequence belongs to the CDP-alcohol phosphatidyltransferase class-I family.

The protein resides in the cell inner membrane. It catalyses the reaction a CDP-1,2-diacyl-sn-glycerol + sn-glycerol 3-phosphate = a 1,2-diacyl-sn-glycero-3-phospho-(1'-sn-glycero-3'-phosphate) + CMP + H(+). It functions in the pathway phospholipid metabolism; phosphatidylglycerol biosynthesis; phosphatidylglycerol from CDP-diacylglycerol: step 1/2. Catalyzes the conversion of cytidine diphosphate diacylglycerol (CDP-DG) and glycerol 3-phosphate into phosphatidylglycerol. Essential for the synthesis of anionic phospholipids, thereby playing a role in balancing the ratio of zwitterionic and anionic phospholipids, which is thought to be important for normal membrane function. The protein is CDP-diacylglycerol--glycerol-3-phosphate 3-phosphatidyltransferase of Wigglesworthia glossinidia brevipalpis.